Here is a 247-residue protein sequence, read N- to C-terminus: ATP synthase subunit a, chloroplastic (247 aa).

Helical transmembrane passes span 38–58 (QVLI…AIAV), 95–115 (VPFI…GALL), 134–154 (INTT…AGLT), 199–219 (LVVV…VMFL), and 220–240 (GLFT…AYIG).

The protein belongs to the ATPase A chain family. As to quaternary structure, F-type ATPases have 2 components, CF(1) - the catalytic core - and CF(0) - the membrane proton channel. CF(1) has five subunits: alpha(3), beta(3), gamma(1), delta(1), epsilon(1). CF(0) has four main subunits: a, b, b' and c.

It localises to the plastid. Its subcellular location is the chloroplast thylakoid membrane. Its function is as follows. Key component of the proton channel; it plays a direct role in the translocation of protons across the membrane. This chain is ATP synthase subunit a, chloroplastic, found in Calycanthus floridus var. glaucus (Eastern sweetshrub).